The sequence spans 441 residues: Ribosomal protein uS12 methylthiotransferase RimO (441 aa).

In terms of domain architecture, MTTase N-terminal spans 8-118 (PKIGFVSLGC…VLQHVHHYVP (111 aa)). The [4Fe-4S] cluster site is built by Cys-17, Cys-53, Cys-82, Cys-150, Cys-154, and Cys-157. Positions 136–373 (LTPRHYAYLK…MQLQQQISAE (238 aa)) constitute a Radical SAM core domain. Residues 376-441 (QEKVGREILV…DEYDLWGSRV (66 aa)) enclose the TRAM domain.

It belongs to the methylthiotransferase family. RimO subfamily. [4Fe-4S] cluster serves as cofactor.

The protein resides in the cytoplasm. It carries out the reaction L-aspartate(89)-[ribosomal protein uS12]-hydrogen + (sulfur carrier)-SH + AH2 + 2 S-adenosyl-L-methionine = 3-methylsulfanyl-L-aspartate(89)-[ribosomal protein uS12]-hydrogen + (sulfur carrier)-H + 5'-deoxyadenosine + L-methionine + A + S-adenosyl-L-homocysteine + 2 H(+). Catalyzes the methylthiolation of an aspartic acid residue of ribosomal protein uS12. The sequence is that of Ribosomal protein uS12 methylthiotransferase RimO from Salmonella arizonae (strain ATCC BAA-731 / CDC346-86 / RSK2980).